The primary structure comprises 456 residues: Putrescine--pyruvate aminotransferase (456 aa).

Residue Tyr156 coordinates substrate. Pyridoxal 5'-phosphate is bound at residue Asp262. The residue at position 291 (Lys291) is an N6-(pyridoxal phosphate)lysine. Gly322 and Arg417 together coordinate substrate.

This sequence belongs to the class-III pyridoxal-phosphate-dependent aminotransferase family. Pyridoxal 5'-phosphate serves as cofactor.

The catalysed reaction is putrescine + pyruvate = 4-aminobutanal + L-alanine. Its pathway is amine and polyamine degradation; putrescine degradation; 4-aminobutanal from putrescine (transaminase route). Functionally, involved in the putrescine catabolism. Catalyzes the transfer of the amino group from putrescine to pyruvate to yield 4-aminobutanal and alanine. This Pseudomonas aeruginosa (strain ATCC 15692 / DSM 22644 / CIP 104116 / JCM 14847 / LMG 12228 / 1C / PRS 101 / PAO1) protein is Putrescine--pyruvate aminotransferase.